Here is a 545-residue protein sequence, read N- to C-terminus: CTP synthase (545 aa).

Residues 1 to 266 are amidoligase domain; the sequence is MATNYIFVTG…DDFVCERFRL (266 aa). Position 14 (S14) interacts with CTP. Residue S14 participates in UTP binding. ATP contacts are provided by residues 15-20 and D72; that span reads SLGKGI. The Mg(2+) site is built by D72 and E140. CTP-binding positions include 147–149, 187–192, and K223; these read DIE and KTKPTQ. Residues 187 to 192 and K223 each bind UTP; that span reads KTKPTQ. 239–241 contacts ATP; sequence KDV. The region spanning 291–542 is the Glutamine amidotransferase type-1 domain; sequence TIGMVGKYTE…VKAAYENHKK (252 aa). G352 contributes to the L-glutamine binding site. The Nucleophile; for glutamine hydrolysis role is filled by C379. Residues 380–383, E403, and R470 contribute to the L-glutamine site; that span reads LGMQ. Residues H515 and E517 contribute to the active site.

It belongs to the CTP synthase family. Homotetramer.

It carries out the reaction UTP + L-glutamine + ATP + H2O = CTP + L-glutamate + ADP + phosphate + 2 H(+). The catalysed reaction is L-glutamine + H2O = L-glutamate + NH4(+). The enzyme catalyses UTP + NH4(+) + ATP = CTP + ADP + phosphate + 2 H(+). It participates in pyrimidine metabolism; CTP biosynthesis via de novo pathway; CTP from UDP: step 2/2. Allosterically activated by GTP, when glutamine is the substrate; GTP has no effect on the reaction when ammonia is the substrate. The allosteric effector GTP functions by stabilizing the protein conformation that binds the tetrahedral intermediate(s) formed during glutamine hydrolysis. Inhibited by the product CTP, via allosteric rather than competitive inhibition. Its function is as follows. Catalyzes the ATP-dependent amination of UTP to CTP with either L-glutamine or ammonia as the source of nitrogen. Regulates intracellular CTP levels through interactions with the four ribonucleotide triphosphates. The polypeptide is CTP synthase (Haemophilus influenzae (strain PittEE)).